We begin with the raw amino-acid sequence, 171 residues long: 3-hydroxydecanoyl-[acyl-carrier-protein] dehydratase (171 aa).

Residue His70 is part of the active site.

This sequence belongs to the thioester dehydratase family. FabA subfamily. Homodimer.

The protein resides in the cytoplasm. It carries out the reaction a (3R)-hydroxyacyl-[ACP] = a (2E)-enoyl-[ACP] + H2O. The enzyme catalyses (3R)-hydroxydecanoyl-[ACP] = (2E)-decenoyl-[ACP] + H2O. The catalysed reaction is (2E)-decenoyl-[ACP] = (3Z)-decenoyl-[ACP]. Its pathway is lipid metabolism; fatty acid biosynthesis. Its function is as follows. Necessary for the introduction of cis unsaturation into fatty acids. Catalyzes the dehydration of (3R)-3-hydroxydecanoyl-ACP to E-(2)-decenoyl-ACP and then its isomerization to Z-(3)-decenoyl-ACP. Can catalyze the dehydratase reaction for beta-hydroxyacyl-ACPs with saturated chain lengths up to 16:0, being most active on intermediate chain length. The chain is 3-hydroxydecanoyl-[acyl-carrier-protein] dehydratase from Shewanella oneidensis (strain ATCC 700550 / JCM 31522 / CIP 106686 / LMG 19005 / NCIMB 14063 / MR-1).